The sequence spans 134 residues: Profilin-3 (134 aa).

A disulfide bridge links Cys13 with Cys118. The Involved in PIP2 interaction signature appears at 84 to 100; sequence AVIRGKKGSGGITIKKT. Thr114 carries the post-translational modification Phosphothreonine.

The protein belongs to the profilin family. In terms of assembly, occurs in many kinds of cells as a complex with monomeric actin in a 1:1 ratio. In terms of processing, phosphorylated by MAP kinases.

The protein resides in the cytoplasm. The protein localises to the cytoskeleton. Functionally, binds to actin and affects the structure of the cytoskeleton. At high concentrations, profilin prevents the polymerization of actin, whereas it enhances it at low concentrations. The chain is Profilin-3 from Olea europaea (Common olive).